The primary structure comprises 378 residues: H repeat-associated putative transposase YhhI (378 aa).

It belongs to the transposase 11 family.

The sequence is that of H repeat-associated putative transposase YhhI (yhhI) from Escherichia coli (strain K12).